Consider the following 403-residue polypeptide: S-adenosylmethionine synthase (403 aa).

His22 contacts ATP. A Mg(2+)-binding site is contributed by Asp24. Glu50 is a K(+) binding site. L-methionine-binding residues include Glu63 and Gln107. Residues 107–117 are flexible loop; the sequence is QSPDIAMGVDK. Residues 182–184, 248–249, Asp257, 263–264, Ala280, and Lys284 contribute to the ATP site; these read DAK, RF, and RK. Asp257 lines the L-methionine pocket. Residue Lys288 coordinates L-methionine.

It belongs to the AdoMet synthase family. Homotetramer; dimer of dimers. Requires Mg(2+) as cofactor. It depends on K(+) as a cofactor.

It localises to the cytoplasm. It catalyses the reaction L-methionine + ATP + H2O = S-adenosyl-L-methionine + phosphate + diphosphate. It functions in the pathway amino-acid biosynthesis; S-adenosyl-L-methionine biosynthesis; S-adenosyl-L-methionine from L-methionine: step 1/1. Catalyzes the formation of S-adenosylmethionine (AdoMet) from methionine and ATP. The overall synthetic reaction is composed of two sequential steps, AdoMet formation and the subsequent tripolyphosphate hydrolysis which occurs prior to release of AdoMet from the enzyme. The polypeptide is S-adenosylmethionine synthase (Chloroflexus aurantiacus (strain ATCC 29366 / DSM 635 / J-10-fl)).